The primary structure comprises 371 residues: Putative glutamate--cysteine ligase 2 (371 aa).

Belongs to the glutamate--cysteine ligase type 2 family. YbdK subfamily.

The catalysed reaction is L-cysteine + L-glutamate + ATP = gamma-L-glutamyl-L-cysteine + ADP + phosphate + H(+). Functionally, ATP-dependent carboxylate-amine ligase which exhibits weak glutamate--cysteine ligase activity. The protein is Putative glutamate--cysteine ligase 2 of Burkholderia ambifaria (strain MC40-6).